The sequence spans 887 residues: Alanine--tRNA ligase (887 aa).

Positions 563, 567, 677, and 681 each coordinate Zn(2+).

The protein belongs to the class-II aminoacyl-tRNA synthetase family. The cofactor is Zn(2+).

Its subcellular location is the cytoplasm. It catalyses the reaction tRNA(Ala) + L-alanine + ATP = L-alanyl-tRNA(Ala) + AMP + diphosphate. Catalyzes the attachment of alanine to tRNA(Ala) in a two-step reaction: alanine is first activated by ATP to form Ala-AMP and then transferred to the acceptor end of tRNA(Ala). Also edits incorrectly charged Ser-tRNA(Ala) and Gly-tRNA(Ala) via its editing domain. This is Alanine--tRNA ligase from Dinoroseobacter shibae (strain DSM 16493 / NCIMB 14021 / DFL 12).